We begin with the raw amino-acid sequence, 79 residues long: Dolichyl-diphosphooligosaccharide--protein glycosyltransferase subunit TMEM258 (79 aa).

2 helical membrane passes run 19 to 39 and 55 to 75; these read PLLTTFLCGVGLLLLATFTMI and FIAATSSVFLGFGSVFLLLWV.

Belongs to the OST5 family. Component of the oligosaccharyltransferase (OST) complex.

Its subcellular location is the membrane. Its pathway is protein modification; protein glycosylation. In terms of biological role, subunit of the oligosaccharyl transferase (OST) complex that catalyzes the initial transfer of a defined glycan (Glc(3)Man(9)GlcNAc(2) in eukaryotes) from the lipid carrier dolichol-pyrophosphate to an asparagine residue within an Asn-X-Ser/Thr consensus motif in nascent polypeptide chains, the first step in protein N-glycosylation. N-glycosylation occurs cotranslationally and the complex associates with the Sec61 complex at the channel-forming translocon complex that mediates protein translocation across the endoplasmic reticulum (ER). All subunits are required for a maximal enzyme activity. This Caenorhabditis elegans protein is Dolichyl-diphosphooligosaccharide--protein glycosyltransferase subunit TMEM258.